Consider the following 590-residue polypeptide: Multidrug resistance-like ATP-binding protein MdlA (590 aa).

Residues 18–303 enclose the ABC transmembrane type-1 domain; the sequence is YLGAVALLVI…LAWMFNIVER (286 aa). A run of 6 helical transmembrane segments spans residues 23–43, 53–73, 134–154, 155–175, 248–268, and 280–300; these read ALLVIIAMLQLVPPKVVGIVV, TGQILMWIATMVLIAVVVYLL, GVLTLVDSLVMGCAVLIMMST, QISWQLTLFSLLPMPVMAIMI, IYIAIGMANLLAIGGGSWMVV, and FMMYLGLMIWPMLALAWMFNI. The ABC transporter domain maps to 337–570; the sequence is VNIHQFTYPQ…SGWYRDMYRY (234 aa). 369-376 contacts ATP; it reads GPTGSGKS.

This sequence belongs to the ABC transporter superfamily. Drug exporter-2 (TC 3.A.1.117) family.

The protein resides in the cell inner membrane. It carries out the reaction ATP + H2O + xenobioticSide 1 = ADP + phosphate + xenobioticSide 2.. This Escherichia coli (strain K12) protein is Multidrug resistance-like ATP-binding protein MdlA (mdlA).